The following is a 498-amino-acid chain: Glycerol kinase (498 aa).

Position 12 (Thr-12) interacts with ADP. 3 residues coordinate ATP: Thr-12, Thr-13, and Ser-14. Position 12 (Thr-12) interacts with sn-glycerol 3-phosphate. Arg-16 is a binding site for ADP. Sn-glycerol 3-phosphate-binding residues include Arg-82, Glu-83, Tyr-134, and Asp-243. Residues Arg-82, Glu-83, Tyr-134, Asp-243, and Gln-244 each contribute to the glycerol site. Thr-265 and Gly-308 together coordinate ADP. The ATP site is built by Thr-265, Gly-308, Gln-312, and Gly-409. ADP-binding residues include Gly-409 and Asn-413.

This sequence belongs to the FGGY kinase family. Homotetramer and homodimer (in equilibrium).

It catalyses the reaction glycerol + ATP = sn-glycerol 3-phosphate + ADP + H(+). The protein operates within polyol metabolism; glycerol degradation via glycerol kinase pathway; sn-glycerol 3-phosphate from glycerol: step 1/1. With respect to regulation, activated by phosphorylation and inhibited by fructose 1,6-bisphosphate (FBP). Functionally, key enzyme in the regulation of glycerol uptake and metabolism. Catalyzes the phosphorylation of glycerol to yield sn-glycerol 3-phosphate. In Clostridium botulinum (strain Okra / Type B1), this protein is Glycerol kinase.